Reading from the N-terminus, the 206-residue chain is Cytochrome c biogenesis ATP-binding export protein CcmA (206 aa).

One can recognise an ABC transporter domain in the interval 4–205 (LEGIDLTCIR…AGAAIQRLQL (202 aa)). 36–43 (GPNGSGKT) contacts ATP.

Belongs to the ABC transporter superfamily. CcmA exporter (TC 3.A.1.107) family. The complex is composed of two ATP-binding proteins (CcmA) and two transmembrane proteins (CcmB).

It is found in the cell inner membrane. It carries out the reaction heme b(in) + ATP + H2O = heme b(out) + ADP + phosphate + H(+). In terms of biological role, part of the ABC transporter complex CcmAB involved in the biogenesis of c-type cytochromes; once thought to export heme, this seems not to be the case, but its exact role is uncertain. Responsible for energy coupling to the transport system. The protein is Cytochrome c biogenesis ATP-binding export protein CcmA of Nitrosospira multiformis (strain ATCC 25196 / NCIMB 11849 / C 71).